The chain runs to 151 residues: Ribosome maturation factor RimP (151 aa).

The protein belongs to the RimP family.

The protein localises to the cytoplasm. Functionally, required for maturation of 30S ribosomal subunits. In Haemophilus influenzae (strain PittEE), this protein is Ribosome maturation factor RimP.